A 142-amino-acid chain; its full sequence is Transcriptional regulator MraZ (142 aa).

SpoVT-AbrB domains are found at residues 5 to 51 and 77 to 120; these read ASSL…PRPV and ASDV…DAAR.

The protein belongs to the MraZ family. In terms of assembly, forms oligomers.

It localises to the cytoplasm. Its subcellular location is the nucleoid. This Herminiimonas arsenicoxydans protein is Transcriptional regulator MraZ.